A 196-amino-acid chain; its full sequence is Small ribosomal subunit protein uS4c (196 aa).

Residues 17-36 (ALPGLTRKTPKSGSNLKKKF) are disordered. In terms of domain architecture, S4 RNA-binding spans 89-150 (MRLDNIVFRL…NQRSKRLVQN (62 aa)).

Belongs to the universal ribosomal protein uS4 family. In terms of assembly, part of the 30S ribosomal subunit. Contacts protein S5. The interaction surface between S4 and S5 is involved in control of translational fidelity.

It is found in the plastid. It localises to the chloroplast. Its function is as follows. One of the primary rRNA binding proteins, it binds directly to 16S rRNA where it nucleates assembly of the body of the 30S subunit. Functionally, with S5 and S12 plays an important role in translational accuracy. This Tragus racemosus (Carrot grass) protein is Small ribosomal subunit protein uS4c (rps4).